A 228-amino-acid polypeptide reads, in one-letter code: Sodium channel regulatory subunit beta-4 (228 aa).

An N-terminal signal peptide occupies residues 1 to 30 (MSRAGNRGNTQARWLGIGLLGLFLLPMYLS). The region spanning 31–148 (LEVSVGKATT…KDLNNSATIF (118 aa)) is the Ig-like C2-type domain. Topologically, residues 31 to 161 (LEVSVGKATT…VDKLEEVDNT (131 aa)) are extracellular. N-linked (GlcNAc...) asparagine glycans are attached at residues N45, N71, N113, and N142. C53 and C131 form a disulfide bridge. Residues 162 to 182 (VTLIILAVVGGVIGLLVCILL) form a helical membrane-spanning segment. Residues 183-228 (LKKLITFILKKTREKKKECLVSSSGNDNTENGLPGSKAEEKPPTKV) lie on the Cytoplasmic side of the membrane. The tract at residues 199–228 (KECLVSSSGNDNTENGLPGSKAEEKPPTKV) is disordered. A compositionally biased stretch (polar residues) spans 203-213 (VSSSGNDNTEN). A compositionally biased stretch (basic and acidic residues) spans 219-228 (KAEEKPPTKV).

This sequence belongs to the sodium channel auxiliary subunit SCN4B (TC 8.A.17) family. A voltage-gated sodium (Nav) channel consists of an ion-conducting pore-forming alpha subunit functional on its own that is regulated by one or more beta subunits. The beta subunit SCN4B is disulfide-linked to the pore-forming alpha subunit. Interacts with SCN1A; regulatory subunit of SCN1A/Nav1.1. Interacts with SCN2A; regulatory subunit of SCN2A/Nav1.2. Post-translationally, contains an interchain disulfide bond with SCN2A. As to expression, expressed at a high level in dorsal root ganglia, at a lower level in brain, spinal cord, skeletal muscle and heart.

It localises to the cell membrane. Regulatory subunit of multiple voltage-gated sodium (Nav) channels directly mediating the depolarization of excitable membranes. Navs, also called VGSCs (voltage-gated sodium channels) or VDSCs (voltage-dependent sodium channels), operate by switching between closed and open conformations depending on the voltage difference across the membrane. In the open conformation they allow Na(+) ions to selectively pass through the pore, along their electrochemical gradient. The influx of Na+ ions provokes membrane depolarization, initiating the propagation of electrical signals throughout cells and tissues. The accessory beta subunits participate in localization and functional modulation of the Nav channels. Modulates the activity of SCN1A/Nav1.1. Modulates the activity of SCN2A/Nav1.2. In Rattus norvegicus (Rat), this protein is Sodium channel regulatory subunit beta-4.